Reading from the N-terminus, the 178-residue chain is Protein GrpE (178 aa).

This sequence belongs to the GrpE family. In terms of assembly, homodimer.

It is found in the cytoplasm. In terms of biological role, participates actively in the response to hyperosmotic and heat shock by preventing the aggregation of stress-denatured proteins, in association with DnaK and GrpE. It is the nucleotide exchange factor for DnaK and may function as a thermosensor. Unfolded proteins bind initially to DnaJ; upon interaction with the DnaJ-bound protein, DnaK hydrolyzes its bound ATP, resulting in the formation of a stable complex. GrpE releases ADP from DnaK; ATP binding to DnaK triggers the release of the substrate protein, thus completing the reaction cycle. Several rounds of ATP-dependent interactions between DnaJ, DnaK and GrpE are required for fully efficient folding. The sequence is that of Protein GrpE from Rickettsia akari (strain Hartford).